A 237-amino-acid chain; its full sequence is Ribonuclease PH (237 aa).

Residues R86 and G124–R126 each bind phosphate.

It belongs to the RNase PH family. In terms of assembly, homohexameric ring arranged as a trimer of dimers.

The enzyme catalyses tRNA(n+1) + phosphate = tRNA(n) + a ribonucleoside 5'-diphosphate. Phosphorolytic 3'-5' exoribonuclease that plays an important role in tRNA 3'-end maturation. Removes nucleotide residues following the 3'-CCA terminus of tRNAs; can also add nucleotides to the ends of RNA molecules by using nucleoside diphosphates as substrates, but this may not be physiologically important. Probably plays a role in initiation of 16S rRNA degradation (leading to ribosome degradation) during starvation. The chain is Ribonuclease PH from Bradyrhizobium sp. (strain ORS 278).